A 229-amino-acid polypeptide reads, in one-letter code: Demethylmenaquinone methyltransferase (229 aa).

S-adenosyl-L-methionine contacts are provided by residues Thr57, Asp77, and 101-102; that span reads DV.

Belongs to the class I-like SAM-binding methyltransferase superfamily. MenG/UbiE family.

It carries out the reaction a 2-demethylmenaquinol + S-adenosyl-L-methionine = a menaquinol + S-adenosyl-L-homocysteine + H(+). It participates in quinol/quinone metabolism; menaquinone biosynthesis; menaquinol from 1,4-dihydroxy-2-naphthoate: step 2/2. Methyltransferase required for the conversion of demethylmenaquinol (DMKH2) to menaquinol (MKH2). The polypeptide is Demethylmenaquinone methyltransferase (Chlamydia trachomatis serovar A (strain ATCC VR-571B / DSM 19440 / HAR-13)).